The chain runs to 352 residues: MDYEVSSPIYDIDYGASEPCQKIDVKQMGAQLLPPLYSMVFLFGFVGNMLVVLILINCKRLKSMTDIYLLNLAISDLFFLFTVPFWAHYAAGQWDFGNTMCQFLTGLYFIGFFSGIFFIILLTIDRYLAIVHAVFALKARTVTFGVVTSVITWVVAVFASLPGIIFTRSQKEGYHYTCSPHFPFGQYRFWKNLETLKMVILGLVLPLLVMVICYSGILKTLLRCRNEKKRHRAVRLIFTIMIVYFLFWAPYNIVLLLNTYQEFFGLNNCSSSNRLDQAMQVTETLGMTHCCVNPIIYAFVGEKFRNYLLVFFQKHIAKRFCKCCSIFQKEAPERANSVYTRSTGEQEISVGL.

Over 1–30 the chain is Extracellular; sequence MDYEVSSPIYDIDYGASEPCQKIDVKQMGA. The residue at position 3 (Tyr-3) is a Sulfotyrosine. Residues Ser-6 and Ser-7 are each glycosylated (O-linked (GalNAc...) serine). A sulfotyrosine mark is found at Tyr-10 and Tyr-14. 2 disulfides stabilise this stretch: Cys-20–Cys-269 and Cys-101–Cys-178. A helical membrane pass occupies residues 31–58; the sequence is QLLPPLYSMVFLFGFVGNMLVVLILINC. The Cytoplasmic portion of the chain corresponds to 59–68; the sequence is KRLKSMTDIY. Residues 69-89 form a helical membrane-spanning segment; it reads LLNLAISDLFFLFTVPFWAHY. Over 90–102 the chain is Extracellular; that stretch reads AAGQWDFGNTMCQ. Residues 103–124 form a helical membrane-spanning segment; the sequence is FLTGLYFIGFFSGIFFIILLTI. Over 125–141 the chain is Cytoplasmic; the sequence is DRYLAIVHAVFALKART. The chain crosses the membrane as a helical span at residues 142–166; it reads VTFGVVTSVITWVVAVFASLPGIIF. Residues 167–198 are Extracellular-facing; the sequence is TRSQKEGYHYTCSPHFPFGQYRFWKNLETLKM. The helical transmembrane segment at 199–218 threads the bilayer; that stretch reads VILGLVLPLLVMVICYSGIL. At 219 to 235 the chain is on the cytoplasmic side; sequence KTLLRCRNEKKRHRAVR. A helical membrane pass occupies residues 236 to 260; it reads LIFTIMIVYFLFWAPYNIVLLLNTY. The Extracellular portion of the chain corresponds to 261–277; it reads QEFFGLNNCSSSNRLDQ. A helical membrane pass occupies residues 278 to 301; it reads AMQVTETLGMTHCCVNPIIYAFVG. The Cytoplasmic portion of the chain corresponds to 302–352; the sequence is EKFRNYLLVFFQKHIAKRFCKCCSIFQKEAPERANSVYTRSTGEQEISVGL. 3 S-palmitoyl cysteine lipidation sites follow: Cys-321, Cys-323, and Cys-324. Residues Ser-337, Ser-342, and Ser-349 each carry the phosphoserine; by BARK1 modification.

It belongs to the G-protein coupled receptor 1 family. As to quaternary structure, interacts with PRAF2. Efficient ligand binding to CCL3/MIP-1alpha and CCL4/MIP-1beta requires sulfation, O-glycosylation and sialic acid modifications. Glycosylation on Ser-6 is required for efficient binding of CCL4. Interacts with GRK2. Interacts with ARRB1 and ARRB2. Interacts with CNIH4. Interacts with S100A4; this interaction stimulates T-lymphocyte chemotaxis. Post-translationally, sulfated on at least 2 of the N-terminal tyrosines. Sulfation is required for efficient binding of the chemokines, CCL3 and CCL4. In terms of processing, palmitoylation in the C-terminal is important for cell surface expression. Phosphorylation on serine residues in the C-terminal is stimulated by binding CC chemokines especially by APO-RANTES. Post-translationally, O-glycosylated, but not N-glycosylated. Ser-6 appears to be the major site even if Ser-7 may be also O-glycosylated. Also sialylated glycans present which contribute to chemokine binding. Ser-17 may also be glycosylated and, if so, with small moieties such as a T-antigen.

The protein localises to the cell membrane. Its function is as follows. Receptor for a number of inflammatory CC-chemokines including CCL3/MIP-1-alpha, CCL4/MIP-1-beta and RANTES and subsequently transduces a signal by increasing the intracellular calcium ion level. May play a role in the control of granulocytic lineage proliferation or differentiation. Participates in T-lymphocyte migration to the infection site by acting as a chemotactic receptor. In Plecturocebus moloch (Dusky titi monkey), this protein is C-C chemokine receptor type 5 (CCR5).